A 432-amino-acid polypeptide reads, in one-letter code: Alpha-enolase (432 aa).

Serine 40 is a binding site for Mg(2+). Residues histidine 158 and glutamate 167 each coordinate substrate. Residue glutamate 210 is the Proton donor of the active site. 3 residues coordinate Mg(2+): aspartate 245, glutamate 293, and aspartate 318. Substrate is bound by residues glutamate 293 and aspartate 318. The active-site Proton acceptor is the lysine 343. Residues 370–373 (SHRS) and lysine 394 contribute to the substrate site.

Belongs to the enolase family. As to quaternary structure, dimer. Mg(2+) is required as a cofactor.

The protein resides in the cytoplasm. It catalyses the reaction (2R)-2-phosphoglycerate = phosphoenolpyruvate + H2O. It functions in the pathway carbohydrate degradation; glycolysis; pyruvate from D-glyceraldehyde 3-phosphate: step 4/5. Its function is as follows. Multifunctional enzyme that, as well as its role in glycolysis, plays a part in various processes such as growth control, hypoxia tolerance and allergic responses. The sequence is that of Alpha-enolase from Thunnus albacares (Yellowfin tuna).